The following is a 90-amino-acid chain: ATP synthase subunit c (90 aa).

The next 2 membrane-spanning stretches (helical) occupy residues 4–24 (FVYS…GCGI) and 53–73 (IGLA…LILI).

The protein belongs to the ATPase C chain family. In terms of assembly, F-type ATPases have 2 components, F(1) - the catalytic core - and F(0) - the membrane proton channel. F(1) has five subunits: alpha(3), beta(3), gamma(1), delta(1), epsilon(1). F(0) has three main subunits: a(1), b(2) and c(10-14). The alpha and beta chains form an alternating ring which encloses part of the gamma chain. F(1) is attached to F(0) by a central stalk formed by the gamma and epsilon chains, while a peripheral stalk is formed by the delta and b chains.

It is found in the cell inner membrane. Its function is as follows. F(1)F(0) ATP synthase produces ATP from ADP in the presence of a proton or sodium gradient. F-type ATPases consist of two structural domains, F(1) containing the extramembraneous catalytic core and F(0) containing the membrane proton channel, linked together by a central stalk and a peripheral stalk. During catalysis, ATP synthesis in the catalytic domain of F(1) is coupled via a rotary mechanism of the central stalk subunits to proton translocation. In terms of biological role, key component of the F(0) channel; it plays a direct role in translocation across the membrane. A homomeric c-ring of between 10-14 subunits forms the central stalk rotor element with the F(1) delta and epsilon subunits. The sequence is that of ATP synthase subunit c from Syntrophobacter fumaroxidans (strain DSM 10017 / MPOB).